The chain runs to 317 residues: tRNA pseudouridine synthase B (317 aa).

Asp-47 functions as the Nucleophile in the catalytic mechanism.

This sequence belongs to the pseudouridine synthase TruB family. Type 1 subfamily.

It catalyses the reaction uridine(55) in tRNA = pseudouridine(55) in tRNA. In terms of biological role, responsible for synthesis of pseudouridine from uracil-55 in the psi GC loop of transfer RNAs. In Shewanella sp. (strain MR-7), this protein is tRNA pseudouridine synthase B.